The following is a 163-amino-acid chain: Crossover junction endodeoxyribonuclease RuvC (163 aa).

Catalysis depends on residues D4, E65, and D138. Mg(2+) is bound by residues D4, E65, and D138.

Belongs to the RuvC family. As to quaternary structure, homodimer which binds Holliday junction (HJ) DNA. The HJ becomes 2-fold symmetrical on binding to RuvC with unstacked arms; it has a different conformation from HJ DNA in complex with RuvA. In the full resolvosome a probable DNA-RuvA(4)-RuvB(12)-RuvC(2) complex forms which resolves the HJ. Mg(2+) is required as a cofactor.

The protein localises to the cytoplasm. The enzyme catalyses Endonucleolytic cleavage at a junction such as a reciprocal single-stranded crossover between two homologous DNA duplexes (Holliday junction).. Functionally, the RuvA-RuvB-RuvC complex processes Holliday junction (HJ) DNA during genetic recombination and DNA repair. Endonuclease that resolves HJ intermediates. Cleaves cruciform DNA by making single-stranded nicks across the HJ at symmetrical positions within the homologous arms, yielding a 5'-phosphate and a 3'-hydroxyl group; requires a central core of homology in the junction. The consensus cleavage sequence is 5'-(A/T)TT(C/G)-3'. Cleavage occurs on the 3'-side of the TT dinucleotide at the point of strand exchange. HJ branch migration catalyzed by RuvA-RuvB allows RuvC to scan DNA until it finds its consensus sequence, where it cleaves and resolves the cruciform DNA. The sequence is that of Crossover junction endodeoxyribonuclease RuvC from Corynebacterium diphtheriae (strain ATCC 700971 / NCTC 13129 / Biotype gravis).